Reading from the N-terminus, the 120-residue chain is MSNLAVKYKQQAQEEVQIQTPPQQMVQPKAKAKITRIEKLLYVAFIGFLLYACVAFIGNKAGLYQVNVEAATIEQKIVQQQKENQELQAEVEKLSRYERIAEVAKKHGLEINANNVKGLK.

Topologically, residues 1-36 are cytoplasmic; sequence MSNLAVKYKQQAQEEVQIQTPPQQMVQPKAKAKITR. The helical transmembrane segment at 37–57 threads the bilayer; that stretch reads IEKLLYVAFIGFLLYACVAFI. At 58–120 the chain is on the extracellular side; the sequence is GNKAGLYQVN…INANNVKGLK (63 aa).

It belongs to the FtsL family.

It localises to the cell membrane. Essential cell division protein. This Bacillus anthracis protein is Cell division protein FtsL.